Consider the following 2110-residue polypeptide: Protein Ycf2 (2110 aa).

The tract at residues D190–S209 is disordered. G1442–S1449 provides a ligand contact to ATP.

This sequence belongs to the Ycf2 family.

Its subcellular location is the plastid. The protein localises to the chloroplast stroma. Probable ATPase of unknown function. Its presence in a non-photosynthetic plant (Epifagus virginiana) and experiments in tobacco indicate that it has an essential function which is probably not related to photosynthesis. The polypeptide is Protein Ycf2 (Panax ginseng (Korean ginseng)).